Reading from the N-terminus, the 310-residue chain is Iron ABC transporter substrate-binding lipoprotein MtsA (310 aa).

The N-terminal stretch at 1-20 is a signal peptide; the sequence is MGKKMSLILGAFLSVFLLVA. A lipid anchor (N-palmitoyl cysteine) is attached at cysteine 21. Cysteine 21 carries S-diacylglycerol cysteine lipidation. Residues histidine 68, histidine 140, glutamate 206, and aspartate 281 each contribute to the Fe(2+) site.

It belongs to the bacterial solute-binding protein 9 family. Lipoprotein receptor antigen (Lrai) subfamily.

Its subcellular location is the cell membrane. Functionally, part of the ATP-binding cassette (ABC) transport system MtsABC involved in iron import. Binds iron with high affinity and specificity and delivers it to the membrane permease for translocation into the cytoplasm. Has low affinity for Zn(2+) and Cu(2+). The chain is Iron ABC transporter substrate-binding lipoprotein MtsA (mtsA) from Streptococcus pyogenes serotype M6 (strain ATCC BAA-946 / MGAS10394).